The sequence spans 956 residues: Matrilin-2 (956 aa).

Residues 1 to 23 form the signal peptide; it reads MEKMLVGCLLMLGQLFLVLPVDG. Residues 57–232 form the VWFA 1 domain; sequence DLVFIIDSSR…SQIESLTSVF (176 aa). N-linked (GlcNAc...) asparagine glycosylation occurs at Asn-221. 10 consecutive EGF-like domains span residues 238–278, 279–319, 320–360, 361–401, 402–442, 443–483, 484–524, 525–565, 566–606, and 607–647; these read TVHM…KTCR, IQDL…KRCT, AVDY…KTCS, KIDY…KTCR, RINY…KTCS, RVDH…KTCS, RADY…KTCA, KLDS…KTCR, RKDV…KRCR, and RKNV…KHCK. 30 disulfides stabilise this stretch: Cys-242–Cys-253, Cys-249–Cys-262, Cys-264–Cys-277, Cys-283–Cys-294, Cys-290–Cys-303, Cys-305–Cys-318, Cys-324–Cys-335, Cys-331–Cys-344, Cys-346–Cys-359, Cys-365–Cys-376, Cys-372–Cys-385, Cys-387–Cys-400, Cys-406–Cys-417, Cys-413–Cys-426, Cys-428–Cys-441, Cys-447–Cys-458, Cys-454–Cys-467, Cys-469–Cys-482, Cys-488–Cys-499, Cys-495–Cys-508, Cys-510–Cys-523, Cys-529–Cys-540, Cys-536–Cys-549, Cys-551–Cys-564, Cys-570–Cys-581, Cys-577–Cys-590, Cys-592–Cys-605, Cys-611–Cys-622, Cys-618–Cys-631, and Cys-633–Cys-646. One can recognise a VWFA 2 domain in the interval 655 to 830; it reads DLVFVIDGSK…STMGEISEKL (176 aa). An N-linked (GlcNAc...) asparagine glycan is attached at Asn-890. A coiled-coil region spans residues 917-955; sequence KCENLILFQNVANEEVRKLTQRLEEMTQRMEALENRLKY.

As to expression, detected in a variety of organs, including calvaria, uterus, heart and brain, as well as fibroblast and osteoblast cell lines.

It localises to the secreted. Its function is as follows. Involved in matrix assembly. The polypeptide is Matrilin-2 (Matn2) (Mus musculus (Mouse)).